Reading from the N-terminus, the 61-residue chain is Temporin-ALj (61 aa).

An N-terminal signal peptide occupies residues M1–C22. Positions E23 to R46 are excised as a propeptide. Leucine amide is present on L59.

It belongs to the frog skin active peptide (FSAP) family. Temporin subfamily. As to expression, expressed by the skin glands.

It is found in the secreted. Functionally, antimicrobial peptide with activity against Gram-positive and Gram-negative bacteria and against fungi. Has been tested against S.aureus (MIC=7.5 ug/mL), B.pumilus (MIC=15.0 ug/mL), B.cereus (MIC=75.0 ug/mL), E.coli (MIC=15.0 ug/mL), B.dysenteriae (MIC=30.0 ug/mL), A.cacoaceticus (MIC=60.0 ug/mL), P.aeruginosa (MIC=7.5 ug/mL) and C.albicans (MIC=5.0 ug/mL). Also shows a weak hemolytic activity. This chain is Temporin-ALj, found in Amolops loloensis (Lolokou Sucker Frog).